The following is a 926-amino-acid chain: Alanine--tRNA ligase (926 aa).

Zn(2+) contacts are provided by His-611, His-615, Cys-714, and His-718.

The protein belongs to the class-II aminoacyl-tRNA synthetase family. Requires Zn(2+) as cofactor.

It is found in the cytoplasm. It catalyses the reaction tRNA(Ala) + L-alanine + ATP = L-alanyl-tRNA(Ala) + AMP + diphosphate. Catalyzes the attachment of alanine to tRNA(Ala) in a two-step reaction: alanine is first activated by ATP to form Ala-AMP and then transferred to the acceptor end of tRNA(Ala). Also edits incorrectly charged Ser-tRNA(Ala) and Gly-tRNA(Ala) via its editing domain. The chain is Alanine--tRNA ligase from Methanosarcina mazei (strain ATCC BAA-159 / DSM 3647 / Goe1 / Go1 / JCM 11833 / OCM 88) (Methanosarcina frisia).